A 325-amino-acid chain; its full sequence is Neisseria adhesin A (325 aa).

The N-terminal stretch at 1–23 (MKHFQSKVLTAAILAALSGSAMA) is a signal peptide. Residues 24-137 (DNPPPSTDEI…NTAAIGENKA (114 aa)) are head domain. Residues 86-135 (LKEVLAQHDQSLADLTGTVDENSEALVKTAEVVNDISADVKANTAAIGEN) adopt a coiled-coil conformation. Residues 139-231 (IAKKADQTAL…LASAEKSITE (93 aa)) form a coiled stalk domain region. An outer membrane translocation of the passenger domain region spans residues 232-270 (HGTRLNGLDRTVSDLRKETRQGLAEQAALSGLFQPYNVG). The next 4 membrane-spanning stretches (beta stranded) occupy residues 270-280 (GRFNVTAAVGG), 284-295 (ESAVAIGTGFRF), 302-308 (KAGVAVG), and 314-325 (SAAYHVGVNYEW). Positions 271 to 325 (RFNVTAAVGGYKSESAVAIGTGFRFTENFAAKAGVAVGTSSGSSAAYHVGVNYEW) are translocator domain.

It belongs to the autotransporter-2 (AT-2) (TC 1.B.40) family. Homotrimer.

It localises to the cell surface. The protein resides in the cell outer membrane. Functionally, an antigenic bacterial cell surface protein that adheres to and induces bacterial uptake by human epithelial cells. In Neisseria meningitidis serogroup B, this protein is Neisseria adhesin A.